The chain runs to 106 residues: Small ribosomal subunit protein uS10 (106 aa).

This sequence belongs to the universal ribosomal protein uS10 family. In terms of assembly, part of the 30S ribosomal subunit.

In terms of biological role, involved in the binding of tRNA to the ribosomes. The polypeptide is Small ribosomal subunit protein uS10 (Pyrobaculum arsenaticum (strain DSM 13514 / JCM 11321 / PZ6)).